We begin with the raw amino-acid sequence, 899 residues long: MLNSHNTNHNNNSASNSNYNKGHKMHLKSATAKATIMKHKLSKFYGYGWMQVFLLLTVLVIGNQSAWQENIRPKLYVELGPEDVLKFVGNESVVDHFKLVTKDGNSLLIGARNTVFNLSIHDLVEQQRLVWTSPEDDTKMCLVKGKDEEACQNYIRIMVVPSPGRLFVCGTNSFRPMCNTYIISDSNYTLEATKNGQAVCPYDPRHNSTSVLADNELYSGTVADFSGSDPIIYREPLQTEQYDSLSLNAPNFVSSFTQGDFVYFFFRETAVEFINCGKAIYSRVARVCKWDKGGPHRFRNRWTSFLKSRLNCSIPGDYPFYFNEIQSASNLVEGQYGSMSSKLIYGVFNTPSNSIPGSAVCAFALQDIADTFEGQFKEQTGINSNWLPVNNAKVPDPRPGSCHNDSRALPDPTLNFIKTHSLMDENVPAFFSQPILVRTSTIYRFTQIAVDAQIKTPGGKTYDVIFVGTDHGKIIKSVNAESADSADKVTSVVIEEIDVLTKSEPIRNLEIVRTMQYDQPKDGSYDDGKLIIVTDSQVVAIQLHRCHNDKITSCSECVALQDPYCAWDKIAGKCRSHGAPRWLEENYFYQNVATGQHAACPSGKINSKDANAGEQKGFRNDMDLLDSRRQSKDQEIIDNIDKNFEDIINAQYTVETLVMAVLAGSIFSLLVGFFTGYFCGRRCHKDEDDNLPYPDTEYEYFEQRQNVNSFPSSCRIQQEPKLLPQVEEVTYAEPVLLPQPPPPNKMHSPKNTLRKPPMHQMHQGPNSETLFQFQPDGYNTQQSYRGRDNFGTLRSHQVMGDNYRRGDGFSTTRSVKKAVNNTNTRNRSLGRARRQPPRHGIVTQHRSNSPQQQQQQSQQPHSSSGSSPVMSNSSSSPAPPSSSPSPQESPKNCSYIYRD.

A compositionally biased stretch (low complexity) spans 1-20 (MLNSHNTNHNNNSASNSNYN). Residues 1 to 24 (MLNSHNTNHNNNSASNSNYNKGHK) form a disordered region. Topologically, residues 1–40 (MLNSHNTNHNNNSASNSNYNKGHKMHLKSATAKATIMKHK) are cytoplasmic. A helical transmembrane segment spans residues 41 to 61 (LSKFYGYGWMQVFLLLTVLVI). The Extracellular segment spans residues 62–657 (GNQSAWQENI…INAQYTVETL (596 aa)). Residues Asn63, Asn90, and Asn117 are each glycosylated (N-linked (GlcNAc...) asparagine). Residues 74-543 (KLYVELGPED…TDSQVVAIQL (470 aa)) form the Sema domain. 2 cysteine pairs are disulfide-bonded: Cys141-Cys151 and Cys169-Cys178. Asn187, Asn207, and Asn311 each carry an N-linked (GlcNAc...) asparagine glycan. 2 disulfides stabilise this stretch: Cys288/Cys402 and Cys312/Cys361. Asn404 is a glycosylation site (N-linked (GlcNAc...) asparagine). Residues 658–678 (VMAVLAGSIFSLLVGFFTGYF) form a helical membrane-spanning segment. Residues 679 to 899 (CGRRCHKDED…PKNCSYIYRD (221 aa)) lie on the Cytoplasmic side of the membrane. Disordered regions lie at residues 735–766 (VLLPQPPPPNKMHSPKNTLRKPPMHQMHQGPN) and 798–899 (VMGD…IYRD). Polar residues predominate over residues 809–827 (FSTTRSVKKAVNNTNTRNR). Over residues 828–837 (SLGRARRQPP) the composition is skewed to basic residues. Residues 847–876 (SNSPQQQQQQSQQPHSSSGSSPVMSNSSSS) show a composition bias toward low complexity.

The protein belongs to the semaphorin family. As to expression, expressed by subsets of neurons and muscles.

Its subcellular location is the cell membrane. In terms of biological role, involved in growth cone guidance through its role in axonal repulsion. Function in neurons is essential for adult survival, motor neuron survival, and is important for climbing behavior and activity. This is Semaphorin-1A from Drosophila melanogaster (Fruit fly).